Reading from the N-terminus, the 142-residue chain is MKYYSNPSFGGMDKNCKMSPRQVTIKAKELWLVNSTMTIAKKNLKKMEKVYDYLNQINIKTLSPESVIYYELWFMFIVECIHIQKIIIEYFQHEKNGEKQPITIGEIVYKIKMMLKPISVPFLKVKTGHVKLFIPEQIFNKF.

Belongs to the IIV-3 015R family.

This is an uncharacterized protein from Aedes vexans (Inland floodwater mosquito).